The chain runs to 227 residues: MAYPMQLGFQDATSPIMEELLHFHDHTLMIVFLISSLVLYIISLMLTTKLTHTSTMDAQEVETVWTILPAVILIMIALPSLRILYMMDEINNPSLTVKTMGHQWYWSYEYTDYEDLSFDSYMIPTSELKPGELRLLEVDNRVVLPMEMTIRVLVSSEDVLHSWAVPSLGLKTDAIPGRLNQTTLMSSRPGLYYGQCSEICGSNHSFMPIVLELVPLKHFEKWSASML.

Topologically, residues 1–14 (MAYPMQLGFQDATS) are mitochondrial intermembrane. A helical transmembrane segment spans residues 15-45 (PIMEELLHFHDHTLMIVFLISSLVLYIISLM). Topologically, residues 46–59 (LTTKLTHTSTMDAQ) are mitochondrial matrix. A helical membrane pass occupies residues 60–87 (EVETVWTILPAVILIMIALPSLRILYMM). Topologically, residues 88-227 (DEINNPSLTV…HFEKWSASML (140 aa)) are mitochondrial intermembrane. Cu cation is bound by residues histidine 161, cysteine 196, glutamate 198, cysteine 200, histidine 204, and methionine 207. Glutamate 198 is a binding site for Mg(2+).

The protein belongs to the cytochrome c oxidase subunit 2 family. Component of the cytochrome c oxidase (complex IV, CIV), a multisubunit enzyme composed of 14 subunits. The complex is composed of a catalytic core of 3 subunits MT-CO1, MT-CO2 and MT-CO3, encoded in the mitochondrial DNA, and 11 supernumerary subunits COX4I, COX5A, COX5B, COX6A, COX6B, COX6C, COX7A, COX7B, COX7C, COX8 and NDUFA4, which are encoded in the nuclear genome. The complex exists as a monomer or a dimer and forms supercomplexes (SCs) in the inner mitochondrial membrane with NADH-ubiquinone oxidoreductase (complex I, CI) and ubiquinol-cytochrome c oxidoreductase (cytochrome b-c1 complex, complex III, CIII), resulting in different assemblies (supercomplex SCI(1)III(2)IV(1) and megacomplex MCI(2)III(2)IV(2)). Found in a complex with TMEM177, COA6, COX18, COX20, SCO1 and SCO2. Interacts with TMEM177 in a COX20-dependent manner. Interacts with COX20. Interacts with COX16. It depends on Cu cation as a cofactor.

Its subcellular location is the mitochondrion inner membrane. It catalyses the reaction 4 Fe(II)-[cytochrome c] + O2 + 8 H(+)(in) = 4 Fe(III)-[cytochrome c] + 2 H2O + 4 H(+)(out). In terms of biological role, component of the cytochrome c oxidase, the last enzyme in the mitochondrial electron transport chain which drives oxidative phosphorylation. The respiratory chain contains 3 multisubunit complexes succinate dehydrogenase (complex II, CII), ubiquinol-cytochrome c oxidoreductase (cytochrome b-c1 complex, complex III, CIII) and cytochrome c oxidase (complex IV, CIV), that cooperate to transfer electrons derived from NADH and succinate to molecular oxygen, creating an electrochemical gradient over the inner membrane that drives transmembrane transport and the ATP synthase. Cytochrome c oxidase is the component of the respiratory chain that catalyzes the reduction of oxygen to water. Electrons originating from reduced cytochrome c in the intermembrane space (IMS) are transferred via the dinuclear copper A center (CU(A)) of subunit 2 and heme A of subunit 1 to the active site in subunit 1, a binuclear center (BNC) formed by heme A3 and copper B (CU(B)). The BNC reduces molecular oxygen to 2 water molecules using 4 electrons from cytochrome c in the IMS and 4 protons from the mitochondrial matrix. This Tragelaphus imberbis (Lesser kudu) protein is Cytochrome c oxidase subunit 2 (MT-CO2).